Consider the following 494-residue polypeptide: Flavin-containing monooxygenase ustF2 (494 aa).

An N-terminal signal peptide occupies residues 1-21; the sequence is MANPQTTRVAVVGAGISGVLA. 13 to 18 provides a ligand contact to FAD; sequence GAGISG. The disordered stretch occupies residues 73–93; sequence EPSYPAMKPSKADPPATNEQE. 250–255 provides a ligand contact to NADP(+); it reads GGGVSS. N459 is a glycosylation site (N-linked (GlcNAc...) asparagine).

This sequence belongs to the FMO family.

Its pathway is mycotoxin biosynthesis. Flavin-containing monooxygenase; part of the gene cluster that mediates the biosynthesis of the secondary metabolite ustiloxin B, an antimitotic tetrapeptide. First, ustA is processed by the subtilisin-like endoprotease Kex2 that is outside the ustiloxin B gene cluster, at the C-terminal side of Arg-Lys, after transfer to Golgi apparatus through the endoplasmic reticulum (ER). Cleavage by KEX2 generates 16 peptides YAIG-I to YAIG-XVI. To process the precursor peptide further, at least two peptidases are necessary to cleave the N-terminal and C-terminal sides of the Tyr-Ala-Ile-Gly core peptide which serves as backbone for the synthesis of ustiloxin B, through cyclization and modification of the tyrosine with a non-protein coding amino acid, norvaline. One of the two peptidases must be the serine peptidase ustP; and the other pepdidase is probably ustH. Macrocyclization of the core peptide derived from ustA requires the tyrosinase ustQ, as well as the homologous oxidases ustYa and ustYb, and leads to the production of the first cyclization product N-desmethylustiloxin F. For the formation of N-desmethylustiloxin F, three oxidation steps are required, hydroxylation at the benzylic position, hydroxylation at either the aromatic ring of Tyr or beta-position of Ile, and oxidative cyclization. UstQ may catalyze the oxidation of a phenol moiety, whereas the ustYa and ustYb are most likely responsible for the remaining two-step oxidations. N-desmethylustiloxin F is then methylated by ustM to yield ustiloxin F which in turn substrate of the cytochrome P450 monooxygenase ustC which catalyzes the formation of S-deoxyustiloxin H. The flavoprotein monooxygenases ustF1 and ustF2 then participate in the modification of the side chain of S-deoxyustiloxin H, leading to the synthesis of an oxime intermediate, via ustiloxin H. Finally, carboxylative dehydration performed by the cysteine desulfurase-like protein ustD yields ustiloxin B. In Aspergillus flavus (strain ATCC 200026 / FGSC A1120 / IAM 13836 / NRRL 3357 / JCM 12722 / SRRC 167), this protein is Flavin-containing monooxygenase ustF2.